A 156-amino-acid chain; its full sequence is ATP synthase subunit b (156 aa).

Residues 7–27 (LIVQMLVFVVFIGLTMKFIWP) form a helical membrane-spanning segment.

Belongs to the ATPase B chain family. As to quaternary structure, F-type ATPases have 2 components, F(1) - the catalytic core - and F(0) - the membrane proton channel. F(1) has five subunits: alpha(3), beta(3), gamma(1), delta(1), epsilon(1). F(0) has three main subunits: a(1), b(2) and c(10-14). The alpha and beta chains form an alternating ring which encloses part of the gamma chain. F(1) is attached to F(0) by a central stalk formed by the gamma and epsilon chains, while a peripheral stalk is formed by the delta and b chains.

It is found in the cell inner membrane. In terms of biological role, f(1)F(0) ATP synthase produces ATP from ADP in the presence of a proton or sodium gradient. F-type ATPases consist of two structural domains, F(1) containing the extramembraneous catalytic core and F(0) containing the membrane proton channel, linked together by a central stalk and a peripheral stalk. During catalysis, ATP synthesis in the catalytic domain of F(1) is coupled via a rotary mechanism of the central stalk subunits to proton translocation. Functionally, component of the F(0) channel, it forms part of the peripheral stalk, linking F(1) to F(0). This is ATP synthase subunit b from Coxiella burnetii (strain CbuK_Q154) (Coxiella burnetii (strain Q154)).